The primary structure comprises 243 residues: Complement C1q tumor necrosis factor-related protein 5 (243 aa).

An N-terminal signal peptide occupies residues 1–15 (MRPLLALLLLGLASG). The interval 15 to 124 (GSPPLDDNKI…VPPPADTPLP (110 aa)) is disordered. The 66-residue stretch at 30–95 (GQPGLPGTPG…AGPVGAIGPA (66 aa)) folds into the Collagen-like domain. The C1q domain occupies 99 to 238 (SVPPRSAFSA…GFLVYSDWHS (140 aa)).

Homotrimer (via collagen-like domain). May form higher order oligomers by supercoiling of the trimers. May interact with ERFE.

It is found in the secreted. In Rattus norvegicus (Rat), this protein is Complement C1q tumor necrosis factor-related protein 5 (C1qtnf5).